The primary structure comprises 878 residues: Phosphoenolpyruvate carboxylase (878 aa).

Catalysis depends on residues histidine 137 and lysine 545.

It belongs to the PEPCase type 1 family. Requires Mg(2+) as cofactor.

The enzyme catalyses oxaloacetate + phosphate = phosphoenolpyruvate + hydrogencarbonate. Forms oxaloacetate, a four-carbon dicarboxylic acid source for the tricarboxylic acid cycle. The sequence is that of Phosphoenolpyruvate carboxylase from Proteus mirabilis (strain HI4320).